A 673-amino-acid polypeptide reads, in one-letter code: MSEFIKKRIRELVDLINYHDYKYYVEDNPEISDYEYDMLYRELVELEKQYPEYIFPDSPTQRVGGKVKEGFKEVVHRVPLLSLSNVFSEGELYDFDRRLRELLGTDDFNYVVEYKIDGLSVALEYENGLFVRGATRGDGNVGEDVTENLKTIRSIPLKLKDDINIVVRGEVFMPKDEFIKLNQEREENEEPLFANPRNAAAGSLRQLDPRITAQRKLDIFVFNVQWCEKELKTHDEALRYLKYLGFKVSPDYVVCSNIKEAYEAIKKVEEKRGLLPFEIDGAVVKLNQLALRDVAGSTAKSPRWAVAYKFPPEKKETKLIDIEVNVGRTGILTPTAVLEPVRISGSVVSRATLHNMDYIRQKDIRIGDTVVVQKAAEIIPEVVEVVFSKRTGNERIFEMPKKCPVCGADVIKFEDEVAYRCTGVECPAKSYRLILHFVSRDAMDIAGMGEMIVKNLFERGLIKTPADIYDLKFDDLVNLERFGVKSTNNLLKAIEASKKRPLDRLIFALGIRHIGQKAAKTLAEHISSIDDLFTITEEELLKLPDFGEKMAKSVVTFFRQDQTKHLIERLKKAGVNTVAEKKAKSDILKGYTFVLTGALSKYSRSQAKEILESLGARVSESVSKKTTAVIVGEDPGSKLTKAQELNVKILYEQDFERLISAKSHEEVEKILME.

Residues 33-37, 82-83, and E113 contribute to the NAD(+) site; these read DYEYD and SL. Catalysis depends on K115, which acts as the N6-AMP-lysine intermediate. 4 residues coordinate NAD(+): R136, E170, K285, and K309. The Zn(2+) site is built by C403, C406, C421, and C426. Residues 583-672 form the BRCT domain; it reads AKSDILKGYT…SHEEVEKILM (90 aa).

Belongs to the NAD-dependent DNA ligase family. LigA subfamily. Requires Mg(2+) as cofactor. The cofactor is Mn(2+).

It catalyses the reaction NAD(+) + (deoxyribonucleotide)n-3'-hydroxyl + 5'-phospho-(deoxyribonucleotide)m = (deoxyribonucleotide)n+m + AMP + beta-nicotinamide D-nucleotide.. Functionally, DNA ligase that catalyzes the formation of phosphodiester linkages between 5'-phosphoryl and 3'-hydroxyl groups in double-stranded DNA using NAD as a coenzyme and as the energy source for the reaction. It is essential for DNA replication and repair of damaged DNA. The sequence is that of DNA ligase from Caldicellulosiruptor saccharolyticus (strain ATCC 43494 / DSM 8903 / Tp8T 6331).